The chain runs to 136 residues: Large ribosomal subunit protein bL20c (136 aa).

It belongs to the bacterial ribosomal protein bL20 family.

It is found in the plastid. Its subcellular location is the chloroplast. Functionally, binds directly to 23S ribosomal RNA and is necessary for the in vitro assembly process of the 50S ribosomal subunit. It is not involved in the protein synthesizing functions of that subunit. This is Large ribosomal subunit protein bL20c from Huperzia lucidula (Shining clubmoss).